A 354-amino-acid polypeptide reads, in one-letter code: Protein RecA (354 aa).

65–72 (GPESSGKT) serves as a coordination point for ATP.

The protein belongs to the RecA family.

The protein localises to the cytoplasm. In terms of biological role, can catalyze the hydrolysis of ATP in the presence of single-stranded DNA, the ATP-dependent uptake of single-stranded DNA by duplex DNA, and the ATP-dependent hybridization of homologous single-stranded DNAs. It interacts with LexA causing its activation and leading to its autocatalytic cleavage. In Pseudomonas savastanoi pv. phaseolicola (strain 1448A / Race 6) (Pseudomonas syringae pv. phaseolicola (strain 1448A / Race 6)), this protein is Protein RecA.